The primary structure comprises 31 residues: Cyclotide mden-J (31 aa).

The segment at residues 1 to 31 (GSIPCGESCVYIPCISSIVGCACKSKVCYKN) is a cross-link (cyclopeptide (Gly-Asn)). 3 disulfides stabilise this stretch: C5/C21, C9/C23, and C14/C28.

It belongs to the cyclotide family. Bracelet subfamily. This is a cyclic peptide.

In terms of biological role, probably participates in a plant defense mechanism. In Melicytus dentatus (Tree violet), this protein is Cyclotide mden-J.